Here is a 593-residue protein sequence, read N- to C-terminus: Early nodule-specific protein 2 (593 aa).

Residues 71 to 110 are compositionally biased toward pro residues; it reads EKPPIYEPPPTEEPPPVYKPPIIHPPPNYKPPAHTPPIYH. A disordered region spans residues 71 to 593; that stretch reads EKPPIYEPPP…GHYPPYKKNQ (523 aa). Basic and acidic residues-rich tracts occupy residues 123–138 and 166–195; these read PYEKPPHEEPPREYQP and PPYEKPPPEYQPPHHEKPPPEYQPPHEKPP. Pro residues predominate over residues 196–210; sequence PEYTPPYEKPPPEYQ. Basic and acidic residues-rich tracts occupy residues 227-265 and 275-292; these read PPHEKPPHEHPPPEYQPPHEKPPHEHPPPEYQPPHEKPP and PPHEHPPPEYQPPHEKPP. Over residues 294-306 the composition is skewed to pro residues; sequence VHPPPEYQPPYLK. Composition is skewed to basic and acidic residues over residues 339–350, 360–372, 382–394, and 404–421; these read PPHEKPPHEHPP, PPPEHQPPHENPP, PPHEKPPHYEHPP, and PPPEYKPPHEKPPHEHPP. Pro residues predominate over residues 422–435; that stretch reads PEYQPPQENPPPEY. Residues 506–522 show a composition bias toward basic and acidic residues; that stretch reads PRHEKPMPKYQPPHEKL. Over residues 532–558 the composition is skewed to pro residues; sequence KTPPPQAYHPPPPIYHHPPFHPPPHVK.

It belongs to the nodulin 75 family.

Its function is as follows. Involved in early stages of root nodule development. The polypeptide is Early nodule-specific protein 2 (Medicago truncatula (Barrel medic)).